The following is a 646-amino-acid chain: WW domain-containing adapter protein with coiled-coil (646 aa).

A disordered region spans residues 1–138 (MVMYARKQQR…YDSADDWSEH (138 aa)). Over residues 23 to 37 (QPFQALKYSSKSHPS) the composition is skewed to polar residues. Over residues 38–50 (SGDHRHEKMRDAA) the composition is skewed to basic and acidic residues. Serine 53 carries the phosphoserine modification. Residues 61 to 75 (RSNSPENKYSDSTGH) show a composition bias toward polar residues. The segment covering 103–122 (NHSALHSSNSHSSNPSNNPS) has biased composition (low complexity). The 34-residue stretch at 129–162 (YDSADDWSEHISSSGKKYYYNCRTEVSQWEKPKE) folds into the WW domain. Phosphoserine is present on residues serine 131 and serine 142. Composition is skewed to basic and acidic residues over residues 158–174 (EKPK…KEAN) and 182–191 (PKDRDYRREV). 2 disordered regions span residues 158-352 (EKPK…PQST) and 428-541 (TQAQ…TATV). The span at 211–225 (DASSLLPQNILSQTS) shows a compositional bias: polar residues. Serine 225 is subject to Phosphoserine. Basic and acidic residues predominate over residues 226 to 239 (RHNDKDYRLPRAET). Positions 252–267 (PVVHPTATPSTVPSSP) are enriched in low complexity. Over residues 284–300 (GASTLSKLPTPTASLPA) the composition is skewed to polar residues. Residue threonine 293 is modified to Phosphothreonine. Lysine 302 is subject to N6-acetyllysine. Residues 316 to 331 (SHSCTTPSTSSASGLN) show a composition bias toward polar residues. The segment covering 332–351 (PTSAPPTSASAVPVSPVPQS) has biased composition (low complexity). The segment covering 428 to 463 (TQAQPSNQSPMSLTSDASSPRSYVSPRISTPQTNTV) has biased composition (polar residues). The residue at position 446 (serine 446) is a Phosphoserine. A Phosphothreonine modification is found at threonine 471. Polar residues predominate over residues 490 to 503 (VSHSATQQPVTADK). Residues serine 511, serine 523, and serine 525 each carry the phosphoserine modification. A compositionally biased stretch (low complexity) spans 511 to 524 (SPRSLQRLSSQRSP). Over residues 528–541 (PNHTCSSNASTATV) the composition is skewed to polar residues. Residues 617 to 643 (QATLREQRILFLRQQIKELEKLKNQNS) are a coiled coil.

As to quaternary structure, interacts (via coiled coil domain) with RNF20, RNF40 and UBE2A. Interacts (via WW domain) with RNA polymerase II. Interacts with MTOR and other components of the MTOR pathway including RPTOR, RUVBL1, RUVBL2, TTI1 and TTI2. Phosphorylated on tyrosine residues.

The protein localises to the nucleus speckle. The protein resides in the nucleus. Its function is as follows. Acts as a linker between gene transcription and histone H2B monoubiquitination at 'Lys-120' (H2BK120ub1). Interacts with the RNA polymerase II transcriptional machinery via its WW domain and with RNF20-RNF40 via its coiled coil region, thereby linking and regulating H2BK120ub1 and gene transcription. Regulates the cell-cycle checkpoint activation in response to DNA damage. Positive regulator of amino acid starvation-induced autophagy. Also acts as a negative regulator of basal autophagy. Positively regulates MTOR activity by promoting, in an energy-dependent manner, the assembly of the TTT complex composed of TELO2, TTI1 and TTI2 and the RUVBL complex composed of RUVBL1 and RUVBL2 into the TTT-RUVBL complex. This leads to the dimerization of the mTORC1 complex and its subsequent activation. May negatively regulate the ubiquitin proteasome pathway. The polypeptide is WW domain-containing adapter protein with coiled-coil (Wac) (Mus musculus (Mouse)).